The sequence spans 237 residues: tRNA (guanine-N(1)-)-methyltransferase (237 aa).

S-adenosyl-L-methionine is bound by residues Gly-113 and 133–138; that span reads VGDFIV.

It belongs to the RNA methyltransferase TrmD family. As to quaternary structure, homodimer.

It localises to the cytoplasm. It carries out the reaction guanosine(37) in tRNA + S-adenosyl-L-methionine = N(1)-methylguanosine(37) in tRNA + S-adenosyl-L-homocysteine + H(+). Specifically methylates guanosine-37 in various tRNAs. This Hydrogenovibrio crunogenus (strain DSM 25203 / XCL-2) (Thiomicrospira crunogena) protein is tRNA (guanine-N(1)-)-methyltransferase.